A 795-amino-acid polypeptide reads, in one-letter code: MTEQKHEEYGADSIQVLEGLEAVPKRPGMYIGDTQDGSGLHHMVFEVLDNAIDEALAGHCDKITVTIHADHSVSVADNGRGMPTGIHPKEGRSAAEVIMTVLHAGGKFDNNSYKISGGLHGVGVSVVNALSDWVTLTIYRDGKEHFVRFVRGETEEPLKIVGDSDKKGTTVRFLAGTETFGNIEYSFDILAKRIRELSFLNNGVDIELTDERDGKHESFALSGGVAGFVQYMNRKKTPLHEKIFYAFGEKDGMSVECAMQWNDSYQESVQCFTNNIPQRDGGTHLTALRQVMTRTINSYIEANEVAKKAKVETAGDDMREGLTCVLSVKLPDPKFSSQTKDKLVSGEIGPVVNEVINQALTDFLEENPNEAKIITGKIVDAARARQAARKAREITRRKGLMDGLGLPGKLADCQEKDPALSELYLVEGNSAGGSAMQGRDRKFQAILPLKGKILNVEKARFEKMLASQEVATLITALGAGIGKEEFNPEKLRYHRIIIMTDADVDGAHIRTLLLTFFYRQMPDLVERGYIYIAQPPLYKAKYGKQERYLKDELEKDQWLLGLALEKAKIVSDGRTIEGAELADTAKQFLLAKTVIEQESRFVDELVLRAMLHASPIDLTSSENADKAVAELSGLLDEKEAALERIEGHEGHQFIKITRKLHGNVMVSYIEPKFLNSKAYQTLTQTAAALKGLVGEGAKLYKGENEYDADSFETALDILMSVAQKGMSIQRYKGLGEMNPEQLWETTMDPTVRRLLKVRIEDRIADEVFVTLMGDEVEPRRAFIENNALIAQNIDA.

In terms of domain architecture, Toprim spans 421-536 (SELYLVEGNS…RGYIYIAQPP (116 aa)). Mg(2+) contacts are provided by Glu427, Asp501, and Asp503.

It belongs to the type II topoisomerase GyrB family. Heterotetramer, composed of two GyrA and two GyrB chains. In the heterotetramer, GyrA contains the active site tyrosine that forms a transient covalent intermediate with DNA, while GyrB binds cofactors and catalyzes ATP hydrolysis. It depends on Mg(2+) as a cofactor. Mn(2+) is required as a cofactor. The cofactor is Ca(2+).

The protein localises to the cytoplasm. It carries out the reaction ATP-dependent breakage, passage and rejoining of double-stranded DNA.. Its function is as follows. A type II topoisomerase that negatively supercoils closed circular double-stranded (ds) DNA in an ATP-dependent manner to modulate DNA topology and maintain chromosomes in an underwound state. Negative supercoiling favors strand separation, and DNA replication, transcription, recombination and repair, all of which involve strand separation. Also able to catalyze the interconversion of other topological isomers of dsDNA rings, including catenanes and knotted rings. Type II topoisomerases break and join 2 DNA strands simultaneously in an ATP-dependent manner. This chain is Antibiotic resistant DNA gyrase subunit B, found in Neisseria gonorrhoeae.